The sequence spans 242 residues: 2-C-methyl-D-erythritol 4-phosphate cytidylyltransferase (242 aa).

The protein belongs to the IspD/TarI cytidylyltransferase family. IspD subfamily.

It carries out the reaction 2-C-methyl-D-erythritol 4-phosphate + CTP + H(+) = 4-CDP-2-C-methyl-D-erythritol + diphosphate. Its pathway is isoprenoid biosynthesis; isopentenyl diphosphate biosynthesis via DXP pathway; isopentenyl diphosphate from 1-deoxy-D-xylulose 5-phosphate: step 2/6. Functionally, catalyzes the formation of 4-diphosphocytidyl-2-C-methyl-D-erythritol from CTP and 2-C-methyl-D-erythritol 4-phosphate (MEP). This is 2-C-methyl-D-erythritol 4-phosphate cytidylyltransferase from Halorhodospira halophila (strain DSM 244 / SL1) (Ectothiorhodospira halophila (strain DSM 244 / SL1)).